The chain runs to 183 residues: Seminal plasma protein BSP-30 kDa (183 aa).

The N-terminal stretch at 1–25 (MAPLVGLFLIWAGASVFQQLHPVNG) is a signal peptide. Residues 23-47 (VNGGDIPDPGSKPTPPGMADELPTE) are disordered. O-linked (GalNAc...) threonine glycans are attached at residues threonine 36, threonine 46, threonine 57, threonine 58, threonine 59, and threonine 64. 2 consecutive Fibronectin type-II domains span residues 92–136 (FEGP…FCTE) and 137–183 (RDEP…WKYC). Disulfide bonds link cysteine 97-cysteine 121, cysteine 111-cysteine 134, cysteine 142-cysteine 168, and cysteine 156-cysteine 183.

This sequence belongs to the seminal plasma protein family.

It is found in the secreted. Its function is as follows. Binds to spermatozoa upon ejaculation and may play a role in sperm capacitation. Displays heparin-, gelatin- and phospholipid-binding activities. The protein is Seminal plasma protein BSP-30 kDa of Bos taurus (Bovine).